Reading from the N-terminus, the 1486-residue chain is Collagen alpha-1(II) chain (1486 aa).

The N-terminal stretch at 1–26 is a signal peptide; that stretch reads MFSFVDSRTLVLFAATQVILLAVVRC. Positions 27-183 are cleaved as a propeptide — N-terminal propeptide; that stretch reads QDEEDVLDTG…PPGLGGNFAA (157 aa). The VWFC domain occupies 36 to 94; the sequence is GSCVQHGQRYSDKDVWKPEPCQICVCDTGTVLCDDIICEESKDCPNAEIPFGECCPICP. Positions 100–1241 are disordered; sequence TSSGQGVLKG…EKGPDPMRYM (1142 aa). Basic and acidic residues-rich tracts occupy residues 110 to 121 and 138 to 159; these read QKGEPGDIKDVL and SRGE…RDGE. The span at 163–175 shows a compositional bias: pro residues; it reads PGNPGPVGPPGPP. Low complexity predominate over residues 194-205; the sequence is GGAQMGVMQGPM. The interval 203–1216 is triple-helical region; it reads GPMGPMGPRG…PGPPGPPGPP (1014 aa). Over residues 210 to 219 the composition is skewed to pro residues; the sequence is PRGPPGPTGA. Positions 220-231 are enriched in low complexity; that stretch reads PGPQGFQGNPGE. Gly residues predominate over residues 233–242; sequence GEPGAGGPMG. Residues 253–267 show a composition bias toward basic and acidic residues; sequence PGDDGEAGKPGKSGE. The span at 308–317 shows a compositional bias: gly residues; the sequence is GAKGEGGATG. Composition is skewed to low complexity over residues 318–330, 337–346, 363–373, and 393–421; these read EAGS…PRGL, PGSSGAAGAR, PAGAPGFPGAP, and PRGE…PGAK. Positions 422-431 are enriched in gly residues; it reads GSSGGPGIAG. A compositionally biased stretch (pro residues) spans 435–444; that stretch reads FPGPRGPPGP. Low complexity-rich tracts occupy residues 478-487 and 498-517; these read AGPQGAPGPA and EPGA…PGNR. The segment covering 536-551 has biased composition (gly residues); it reads GVPGLGGPKGGNGDPG. 4-hydroxyproline occurs at positions 661 and 670. Pro-672 is subject to 3-hydroxyproline. Pro-673 and Pro-676 each carry 4-hydroxyproline. Residues 708–732 are compositionally biased toward low complexity; that stretch reads ERGSSGPQGLQGPRGLPGTPGTDGP. The segment covering 766–777 has biased composition (basic and acidic residues); it reads KGDRGDTGEKGP. The segment covering 891–904 has biased composition (low complexity); the sequence is AQGPAGATGFPGAA. 4-hydroxyproline is present on residues Pro-910, Pro-916, and Pro-922. Over residues 913–922 the composition is skewed to pro residues; it reads NGNPGPPGPP. Low complexity predominate over residues 936–955; it reads DAGPPGRAGDPGLQGAAGAP. Over residues 1007–1016 the composition is skewed to gly residues; the sequence is GKQGGPGSSG. The span at 1102–1116 shows a compositional bias: low complexity; that stretch reads SGPAGARGLAGPQGP. Basic and acidic residues predominate over residues 1117–1131; it reads RGDKGEAGEAGERGQ. 3-hydroxyproline is present on Pro-1146. Residues 1150–1159 are compositionally biased toward low complexity; sequence AGDQGATGPA. A 3-hydroxyproline modification is found at Pro-1188. A 4-hydroxyproline modification is found at Pro-1189. The segment covering 1201-1218 has biased composition (pro residues); that stretch reads SGPPGQPGPPGPPGPPGP. Pro-1203 carries the post-translational modification 3-hydroxyproline. 2 positions are modified to 4-hydroxyproline: Pro-1204 and Pro-1207. Pro-1209 bears the 3-hydroxyproline mark. 4-hydroxyproline is present on residues Pro-1210 and Pro-1213. The residue at position 1215 (Pro-1215) is a 3-hydroxyproline. Pro-1216 carries the 4-hydroxyproline modification. Residues 1217–1243 are nonhelical region (C-terminal); that stretch reads GPGIDMSAFAGLSQPEKGPDPMRYMRA. Positions 1244–1486 are cleaved as a propeptide — C-terminal propeptide; it reads DQASNSLPVD…GVDIGPVCFL (243 aa). A Fibrillar collagen NC1 domain is found at 1252–1486; it reads VDVEATLKSL…GVDIGPVCFL (235 aa). Intrachain disulfides connect Cys-1282/Cys-1314, Cys-1322/Cys-1484, and Cys-1392/Cys-1437. Residues Asp-1300, Asn-1302, Gln-1303, Cys-1305, and Asp-1308 each contribute to the Ca(2+) site. Asn-1387 carries an N-linked (GlcNAc...) asparagine glycan.

This sequence belongs to the fibrillar collagen family. Homotrimers of alpha 1(II) chains. Contains mostly 4-hydroxyproline. Prolines at the third position of the tripeptide repeating unit (G-X-P) are 4-hydroxylated in some or all of the chains. Post-translationally, contains 3-hydroxyproline at a few sites. This modification occurs on the first proline residue in the sequence motif Gly-Pro-Hyp, where Hyp is 4-hydroxyproline. In terms of processing, lysine residues at the third position of the tripeptide repeating unit (G-X-Y) are 5-hydroxylated in some or all of the chains. O-glycosylated on hydroxylated lysine residues. The O-linked glycan consists of a Glc-Gal disaccharide.

It is found in the secreted. Its subcellular location is the extracellular space. The protein localises to the extracellular matrix. Type II collagen is specific for cartilaginous tissues. It is essential for the normal embryonic development of the skeleton, for linear growth and for the ability of cartilage to resist compressive forces. In Xenopus laevis (African clawed frog), this protein is Collagen alpha-1(II) chain.